Consider the following 500-residue polypeptide: MDTLLKTPNNLEFLNPHHGFAVKASTFRSEKHHNFGSRKFCETLGRSVCVKGSSSALLELVPETKKENLDFELPMYDPSKGVVVDLAVVGGGPAGLAVAQQVSEAGLSVCSIDPNPKLIWPNNYGVWVDEFEAMDLLDCLDATWSGAAVYIDDNTAKDLHRPYGRVNRKQLKSKMMQKCIMNGVKFHQAKVIKVIHEESKSMLICNDGITIQATVVLDATGFSRSLVQYDKPYNPGYQVAYGILAEVEEHPFDVNKMVFMDWRDSHLKNNTDLKERNSRIPTFLYAMPFSSNRIFLEETSLVARPGLRIDDIQERMVARLNHLGIKVKSIEEDEHCLIPMGGPLPVLPQRVVGIGGTAGMVHPSTGYMVARTLAAAPVVANAIIQYLGSERSHSGNELSTAVWKDLWPIERRRQREFFCFGMDILLKLDLPATRRFFDAFFDLEPRYWHGFLSSRLFLPELIVFGLSLFSHASNTSRFEIMTKGTVPLVNMINNLLQDKE.

A chloroplast-targeting transit peptide spans 1-81 (MDTLLKTPNN…ELPMYDPSKG (81 aa)). NAD(+) is bound at residue 86 to 114 (LAVVGGGPAGLAVAQQVSEAGLSVCSIDP).

The protein belongs to the lycopene cyclase family.

Its subcellular location is the plastid. It localises to the chloroplast. The catalysed reaction is a carotenoid psi-end group = a carotenoid beta-end derivative. It participates in carotenoid biosynthesis; beta-carotene biosynthesis. Its pathway is carotenoid biosynthesis; beta-zeacarotene biosynthesis. Functionally, catalyzes the double cyclization reaction which converts lycopene to beta-carotene and neurosporene to beta-zeacarotene. In Solanum lycopersicum (Tomato), this protein is Lycopene beta cyclase, chloroplastic (LCY1).